Consider the following 366-residue polypeptide: MNLLEKVEQDTMPARYKHMTSQEMIARVTEIKAQLGEDLFIPCHHYQKDEVVPFADAIGDSLQLAQIAANNKKAKHIVFCGVHFMAETADMLTTNEQIVTLPDMRAGCSMADMADIHQLTNAWPKLQHLFGDTILPVTYINSTAAIKSFVGEHGGTTVTSSNATKIVSWALQQKERIFFLPDQHLGRNTAFELGIPLEHMAIWNPIKNELEYDGNLDDCKVILWKGYCSVHQHFTVKNIENIRKNHPNMRIIVHPECTHEVVSLADDSGSTKKIVTEISNAAPGTEWAVGTEANLVGRIIQENPDKKIVSLNPFMCPCMTMNRIDLPHLLWTLEAIQNGEQRNQIKVDEHTTKFALKALERMLQLS.

Histidine 44 and serine 61 together coordinate iminosuccinate. Cysteine 108 serves as a coordination point for [4Fe-4S] cluster. Residues 139–141 and serine 160 contribute to the iminosuccinate site; that span reads YIN. [4Fe-4S] cluster is bound at residue cysteine 228. Iminosuccinate-binding positions include 254-256 and threonine 271; that span reads HPE. Cysteine 318 is a [4Fe-4S] cluster binding site.

It belongs to the quinolinate synthase family. Type 3 subfamily. [4Fe-4S] cluster serves as cofactor.

The protein localises to the cytoplasm. The catalysed reaction is iminosuccinate + dihydroxyacetone phosphate = quinolinate + phosphate + 2 H2O + H(+). The protein operates within cofactor biosynthesis; NAD(+) biosynthesis; quinolinate from iminoaspartate: step 1/1. Functionally, catalyzes the condensation of iminoaspartate with dihydroxyacetone phosphate to form quinolinate. In Listeria innocua serovar 6a (strain ATCC BAA-680 / CLIP 11262), this protein is Quinolinate synthase.